The sequence spans 284 residues: Tropomyosin (284 aa).

The stretch at 1–284 forms a coiled coil; the sequence is MEAIKNKMQA…DQTFAELTGY (284 aa). Residues 22-43 are disordered; the sequence is AEIAEQKSRDANLRAEKSEEEV.

The protein belongs to the tropomyosin family. Homodimer.

Functionally, tropomyosin, in association with the troponin complex, plays a central role in the calcium dependent regulation of muscle contraction. This Lepidoglyphus destructor (Storage mite) protein is Tropomyosin.